Consider the following 444-residue polypeptide: uncharacterized protein (444 aa).

A run of 14 helical transmembrane segments spans residues 9 to 29 (LIVS…MIAV), 42 to 62 (IASI…TQPI), 82 to 102 (LFLI…LIVF), 104 to 126 (ALQA…HVVS), 136 to 156 (FFGL…SILI), 164 to 184 (IFWV…TMFP), 193 to 213 (APLD…IILL), 217 to 237 (EAPW…PLFF), 263 to 283 (LSVL…PLFM), 295 to 315 (GMAL…GAQL), 324 to 344 (IIFL…LLSS), 347 to 367 (SVLF…VGLT), 387 to 407 (GIFS…IGLI), and 411 to 431 (HTLF…SLGI).

It belongs to the major facilitator superfamily. TCR/Tet family.

The protein localises to the cell membrane. This is an uncharacterized protein from Bacillus subtilis (strain 168).